The following is an 888-amino-acid chain: 3-hydroxy-3-methylglutaryl-coenzyme A reductase (888 aa).

Residues 1-9 are Cytoplasmic-facing; it reads MLSRLFRMH. A helical transmembrane segment spans residues 10-39; that stretch reads GLFVASHPWEVIVGTVTLTICMMSMNMFTG. The Lumenal segment spans residues 40–56; sequence NNKICGWNYECPKLEED. The chain crosses the membrane as a helical span at residues 57–78; sequence VLSSDIIILTITRCIAILYIYF. In terms of domain architecture, SSD spans 61–218; the sequence is DIIILTITRC…MTFFPACVSL (158 aa). Positions 75–78 match the INSIG-binding motif motif; it reads YIYF. Residues 79 to 89 lie on the Cytoplasmic side of the membrane; the sequence is QFQNLRQLGSK. Lys-89 participates in a covalent cross-link: Glycyl lysine isopeptide (Lys-Gly) (interchain with G-Cter in ubiquitin). The helical transmembrane segment at 90-114 threads the bilayer; it reads YILGIAGLFTIFSSFVFSTVVIHFL. At 115–123 the chain is on the lumenal side; the sequence is DKELTGLNE. The chain crosses the membrane as a helical span at residues 124–149; that stretch reads ALPFFLLLVDLSRASALAKFALSSNS. Residues 150 to 159 are Cytoplasmic-facing; that stretch reads QDEVRENIAR. Residues 160 to 187 form a helical membrane-spanning segment; sequence GMAILGPTFTLDALVECLVIGVGTMSGV. Residues 188–191 are Lumenal-facing; the sequence is RQLE. Residues 192–220 form a helical membrane-spanning segment; sequence IMCCFGCMSVLANYFVFMTFFPACVSLVL. Residues 221-248 lie on the Cytoplasmic side of the membrane; the sequence is ELSRESREGRPIWQLSHFARVLEEEENK. Lys-248 participates in a covalent cross-link: Glycyl lysine isopeptide (Lys-Gly) (interchain with G-Cter in ubiquitin). The helical transmembrane segment at 249–275 threads the bilayer; sequence PNPVTQRVKMIMSLGLVLVHAHSRWIA. The Lumenal segment spans residues 276–314; that stretch reads DPSPQNSTADNSKVSLGLDENVSKRIEPSVSLWQFYLSK. Asn-281 and Asn-296 each carry an N-linked (GlcNAc...) asparagine glycan. The helical transmembrane segment at 315 to 339 threads the bilayer; it reads MISMDIEQVITLSLALLLAVKYIFF. The Cytoplasmic portion of the chain corresponds to 340–888; sequence EQAETESTLS…LQGTCTKKAA (549 aa). Active-site charge relay system residues include Glu-559, Lys-691, and Asp-767. His-866 functions as the Proton donor in the catalytic mechanism. Ser-872 bears the Phosphoserine; by AMPK mark.

It belongs to the HMG-CoA reductase family. As to quaternary structure, homotetramer. Homodimer. Interacts (via its SSD) with INSIG1; the interaction, accelerated by sterols, leads to the recruitment of HMGCR to AMFR/gp78 for its ubiquitination by the sterol-mediated ERAD pathway. Interacts with UBIAD1. Undergoes sterol-mediated ubiquitination and ER-associated degradation (ERAD). Accumulation of sterols in the endoplasmic reticulum (ER) membrane, triggers binding of the reductase to the ER membrane protein INSIG1 or INSIG2. The INSIG1 binding leads to the recruitment of the ubiquitin ligase, AMFR/gp78, RNF139 or RNF145, initiating ubiquitination of the reductase. The ubiquitinated reductase is then extracted from the ER membrane and delivered to cytosolic 26S proteosomes by a mechanism probably mediated by the ATPase Valosin-containing protein VCP/p97. The INSIG2-binding leads to the recruitment of the ubiquitin ligase RNF139, initiating ubiquitination of the reductase. Lys-248 is the main site of ubiquitination. Ubiquitination is enhanced by the presence of a geranylgeranylated protein. In terms of processing, N-glycosylated. Deglycosylated by NGLY1 on release from the endoplasmic reticulum (ER) in a sterol-mediated manner. Post-translationally, phosphorylated. Phosphorylation at Ser-872 reduces the catalytic activity.

It localises to the endoplasmic reticulum membrane. Its subcellular location is the peroxisome membrane. It catalyses the reaction (R)-mevalonate + 2 NADP(+) + CoA = (3S)-3-hydroxy-3-methylglutaryl-CoA + 2 NADPH + 2 H(+). Its pathway is metabolic intermediate biosynthesis; (R)-mevalonate biosynthesis; (R)-mevalonate from acetyl-CoA: step 3/3. Regulated by a negative feedback mechanism through sterols and non-sterol metabolites derived from mevalonate. Phosphorylation at Ser-872 down-regulates the catalytic activity. Its function is as follows. Catalyzes the conversion of (3S)-hydroxy-3-methylglutaryl-CoA (HMG-CoA) to mevalonic acid, the rate-limiting step in the synthesis of cholesterol and other isoprenoids, thus plays a critical role in cellular cholesterol homeostasis. The sequence is that of 3-hydroxy-3-methylglutaryl-coenzyme A reductase (HMGCR) from Bos taurus (Bovine).